The chain runs to 210 residues: Glycerol-3-phosphate acyltransferase 2 (210 aa).

The next 6 helical transmembrane spans lie at 4–24, 54–74, 82–102, 114–134, 141–161, and 163–183; these read LIMVIIALIAAYFIGSTPAPY, FWPGILVLAVDIGKGALAMAV, LGIQMLCALMAIAGHNYPVWL, IGILAYLMPEGIPIYIACFLV, FPTLSYGISFLSFILVAWLGQ, and DLGKVLFSLLVVMIPIIMYIP.

This sequence belongs to the PlsY family. In terms of assembly, probably interacts with PlsX.

Its subcellular location is the cell membrane. The enzyme catalyses an acyl phosphate + sn-glycerol 3-phosphate = a 1-acyl-sn-glycero-3-phosphate + phosphate. It functions in the pathway lipid metabolism; phospholipid metabolism. Its function is as follows. Catalyzes the transfer of an acyl group from acyl-phosphate (acyl-PO(4)) to glycerol-3-phosphate (G3P) to form lysophosphatidic acid (LPA). This enzyme utilizes acyl-phosphate as fatty acyl donor, but not acyl-CoA or acyl-ACP. This is Glycerol-3-phosphate acyltransferase 2 from Dehalococcoides mccartyi (strain ATCC BAA-2266 / KCTC 15142 / 195) (Dehalococcoides ethenogenes (strain 195)).